The chain runs to 215 residues: Cytochrome b6 (215 aa).

The helical transmembrane segment at 32-52 threads the bilayer; sequence IFHCLGGITLTCFLVQVATGF. Cysteine 35 lines the heme c pocket. Residues histidine 86 and histidine 100 each coordinate heme b. The next 3 membrane-spanning stretches (helical) occupy residues 90 to 110, 116 to 136, and 186 to 206; these read ASMM…TGGF, LTWV…VTGY, and LHTF…FPMI. Heme b contacts are provided by histidine 187 and histidine 202.

Belongs to the cytochrome b family. PetB subfamily. As to quaternary structure, the 4 large subunits of the cytochrome b6-f complex are cytochrome b6, subunit IV (17 kDa polypeptide, PetD), cytochrome f and the Rieske protein, while the 4 small subunits are PetG, PetL, PetM and PetN. The complex functions as a dimer. It depends on heme b as a cofactor. The cofactor is heme c.

Its subcellular location is the plastid. It is found in the chloroplast thylakoid membrane. In terms of biological role, component of the cytochrome b6-f complex, which mediates electron transfer between photosystem II (PSII) and photosystem I (PSI), cyclic electron flow around PSI, and state transitions. This Amborella trichopoda protein is Cytochrome b6.